We begin with the raw amino-acid sequence, 691 residues long: Elongation factor G (691 aa).

Residues 12 to 286 (KKLRNIGIMA…GILEYLPSPL (275 aa)) form the tr-type G domain. GTP-binding positions include 21–28 (AHIDAGKT), 85–89 (DTPGH), and 139–142 (NKMD).

This sequence belongs to the TRAFAC class translation factor GTPase superfamily. Classic translation factor GTPase family. EF-G/EF-2 subfamily.

Its subcellular location is the cytoplasm. In terms of biological role, catalyzes the GTP-dependent ribosomal translocation step during translation elongation. During this step, the ribosome changes from the pre-translocational (PRE) to the post-translocational (POST) state as the newly formed A-site-bound peptidyl-tRNA and P-site-bound deacylated tRNA move to the P and E sites, respectively. Catalyzes the coordinated movement of the two tRNA molecules, the mRNA and conformational changes in the ribosome. The chain is Elongation factor G from Thermosipho africanus (strain TCF52B).